We begin with the raw amino-acid sequence, 901 residues long: Protein translocase subunit SecA (901 aa).

ATP contacts are provided by residues Q87, 105 to 109, and D512; that span reads GEGKT. Zn(2+)-binding residues include C885, C887, C896, and H897.

It belongs to the SecA family. In terms of assembly, monomer and homodimer. Part of the essential Sec protein translocation apparatus which comprises SecA, SecYEG and auxiliary proteins SecDF-YajC and YidC. Zn(2+) serves as cofactor.

Its subcellular location is the cell inner membrane. It is found in the cytoplasm. The catalysed reaction is ATP + H2O + cellular proteinSide 1 = ADP + phosphate + cellular proteinSide 2.. Part of the Sec protein translocase complex. Interacts with the SecYEG preprotein conducting channel. Has a central role in coupling the hydrolysis of ATP to the transfer of proteins into and across the cell membrane, serving both as a receptor for the preprotein-SecB complex and as an ATP-driven molecular motor driving the stepwise translocation of polypeptide chains across the membrane. The protein is Protein translocase subunit SecA of Salmonella schwarzengrund (strain CVM19633).